Here is a 132-residue protein sequence, read N- to C-terminus: MGNDTIGSMITCIRNGNLSKAKTVEVPATQITRSIANILLQEGYIANVRERQYNAIRMLVITLKYQTKTRKPHITIIKYISKPGLRVYSNHQDIPQFLGEMGIVILSTSKGIMMHREARAQKVGGEVLCYVW.

This sequence belongs to the universal ribosomal protein uS8 family. In terms of assembly, part of the 30S ribosomal subunit.

The protein localises to the plastid. The protein resides in the chloroplast. Functionally, one of the primary rRNA binding proteins, it binds directly to 16S rRNA central domain where it helps coordinate assembly of the platform of the 30S subunit. This chain is Small ribosomal subunit protein uS8c (rps8), found in Zygnema circumcarinatum (Green alga).